The following is an 862-amino-acid chain: Piwi-like protein 1 (862 aa).

The segment covering 1–13 (MTGRARARARGRA) has biased composition (basic residues). The interval 1–48 (MTGRARARARGRARGQETVQHVGAAASQQPGYIPPRPQQSPTEGDLVG) is disordered. The residue at position 14 (Arg-14) is an Omega-N-methylarginine; by PRMT5; alternate. Symmetric dimethylarginine; by PRMT5; alternate is present on Arg-14. The residue at position 49 (Arg-49) is an Omega-N-methylarginine; by PRMT5. Residue Arg-53 is modified to Omega-N-methylarginine; alternate. At Arg-53 the chain carries Symmetric dimethylarginine; alternate. The short motif at 218 to 225 (RRLLKIMN) is the D-box element. The region spanning 279–392 (TVLDFMFNLY…LIPELCYLTG (114 aa)) is the PAZ domain. The required for binding 2'-O-methylated 3'-end of piRNAs stretch occupies residues 317–319 (TYR). Arg-371 is subject to Omega-N-methylarginine; by PRMT5. An MID region region spans residues 480–616 (SKETRGAPLI…LQMNCKMGGE (137 aa)). One can recognise a Piwi domain in the interval 556-848 (IVVCLLSSNR…LAFLVGQSIH (293 aa)). Residues Asp-633, Glu-671, Asp-703, and His-837 contribute to the active site.

The protein belongs to the argonaute family. Piwi subfamily. As to quaternary structure, interacts (via Piwi domain) with DICER1, suggesting that it forms ribonucleoprotein RISC complexes; this interaction is regulated by HSP90AB1 activity. Interacts with MAEL, KIF17, PABPC1, PRMT5 and WDR77. Interacts (when methylated on arginine residues) with TDRD1, TDRKH/TDRD2, RNF17/TDRD4, TDRD6, TDRD7 and TDRD9. Interacts with CLOCK. Interacts with MOV10L1. Interacts with ANAPC10; interaction oly takes place following piRNA-binding. Interacts with RNF8; leading to sequester RNF8 in the cytoplasm. Interacts with Tex19.1 and, probably, Tex19.2. Mg(2+) serves as cofactor. Post-translationally, ubiquitinated by the anaphase promoting complex/cyclosome (APC/C) in late spermatids, leading to its degradation. Ubiquitination only takes place following piRNA-binding in adult testis. Ubiquitination and degradation in late spermatogenesis by APC/C is probably required to release RNF8 from the cytoplasm and promote histone to protamine exchange by RNF8. In terms of processing, arginine methylation by PRMT5 is required for the interaction with Tudor domain-containing protein (TDRD1, TDRKH/TDRD2, RNF17/TDRD4, TDRD6, TDRD7 and TDRD9) and subsequent localization to the meiotic nuage, also named P granule. Expressed in brain. Expressed in testis, specifically in spermatocytes (at protein level). Only detected in germ lineage cells of adult testis. Expressed in male gonads 2 weeks after birth at the initiation of spermatogenesis, but not expressed in female gonads.

The protein localises to the cytoplasm. Its function is as follows. Endoribonuclease that plays a central role in postnatal germ cells by repressing transposable elements and preventing their mobilization, which is essential for the germline integrity. Acts via the piRNA metabolic process, which mediates the repression of transposable elements during meiosis by forming complexes composed of piRNAs and Piwi proteins and governs the methylation and subsequent repression of transposons. Directly binds methylated piRNAs, a class of 24 to 30 nucleotide RNAs that are generated by a Dicer-independent mechanism and are primarily derived from transposons and other repeated sequence elements. Strongly prefers a uridine in the first position of their guide (g1U preference, also named 1U-bias). Not involved in the piRNA amplification loop, also named ping-pong amplification cycle. Acts as an endoribonuclease that cleaves transposon messenger RNAs. Besides their function in transposable elements repression, piRNAs are probably involved in other processes during meiosis such as translation regulation. Probable component of some RISC complex, which mediates RNA cleavage and translational silencing. Also plays a role in the formation of chromatoid bodies and is required for some miRNAs stability. Required to sequester RNF8 in the cytoplasm until late spermatogenesis; RNF8 being released upon ubiquitination and degradation of PIWIL1. The sequence is that of Piwi-like protein 1 from Mus musculus (Mouse).